Reading from the N-terminus, the 204-residue chain is Small ribosomal subunit protein uS4 (204 aa).

The interval 22-43 (SGKELARRPYAPGDHGNTGRRP) is disordered. Positions 94 to 154 (TRLDSVVFRL…ERSKKIVPIL (61 aa)) constitute an S4 RNA-binding domain.

The protein belongs to the universal ribosomal protein uS4 family. Part of the 30S ribosomal subunit. Contacts protein S5. The interaction surface between S4 and S5 is involved in control of translational fidelity.

One of the primary rRNA binding proteins, it binds directly to 16S rRNA where it nucleates assembly of the body of the 30S subunit. In terms of biological role, with S5 and S12 plays an important role in translational accuracy. This is Small ribosomal subunit protein uS4 from Oenococcus oeni (strain ATCC BAA-331 / PSU-1).